Here is an 87-residue protein sequence, read N- to C-terminus: HssA/B-like protein 54 (87 aa).

Belongs to the hssA/B family.

This is HssA/B-like protein 54 (hssl54) from Dictyostelium discoideum (Social amoeba).